The primary structure comprises 1144 residues: PAN2-PAN3 deadenylation complex catalytic subunit PAN2 (1144 aa).

WD repeat units lie at residues 27–66 (KKEKQVTKVVFDTEANLIWAGDSYGRVSSYDPTYSLYTRH), 153–193 (SSTY…VIHS), 196–233 (GHSASITSMDFKDNTLVTAGKSKTFGYLQSDQFINVYD), and 302–341 (HPCKSISQFTLSPSGDYLAFLEEESMINMWNRSNSMSGFT). Residues 344-481 (AAVLEYQDYP…LLEYKPSNNI (138 aa)) form a linker region. A USP domain is found at 482–887 (DIPPAYSKLQ…TPEIVVYSDA (406 aa)). The Exonuclease domain maps to 939-1110 (VALDAEFVSL…EDAHTALLLY (172 aa)). A divalent metal cation contacts are provided by D942, E944, D1051, and D1102.

This sequence belongs to the peptidase C19 family. PAN2 subfamily. Forms a heterotrimer with an asymmetric homodimer of the regulatory subunit PAN3 to form the poly(A)-nuclease (PAN) deadenylation complex. A divalent metal cation serves as cofactor.

The protein resides in the cytoplasm. It catalyses the reaction Exonucleolytic cleavage of poly(A) to 5'-AMP.. Its activity is regulated as follows. Positively regulated by the regulatory subunit PAN3. In terms of biological role, catalytic subunit of the poly(A)-nuclease (PAN) deadenylation complex, one of two cytoplasmic mRNA deadenylases involved in mRNA turnover. PAN specifically shortens poly(A) tails of RNA and the activity is stimulated by poly(A)-binding protein PAB1. PAN deadenylation is followed by rapid degradation of the shortened mRNA tails by the CCR4-NOT complex. Deadenylated mRNAs are then degraded by two alternative mechanisms, namely exosome-mediated 3'-5' exonucleolytic degradation, or deadenylation-dependent mRNA decaping and subsequent 5'-3' exonucleolytic degradation by XRN1. May also be involved in post-transcriptional maturation of mRNA poly(A) tails. The protein is PAN2-PAN3 deadenylation complex catalytic subunit PAN2 of Kluyveromyces lactis (strain ATCC 8585 / CBS 2359 / DSM 70799 / NBRC 1267 / NRRL Y-1140 / WM37) (Yeast).